The following is a 962-amino-acid chain: Atromentin synthetase nps3 (962 aa).

The adenylation (A) domain stretch occupies residues 55–469; that stretch reads FISSSAHDSS…SGRIKDTVIV (415 aa). Residues 601 to 679 enclose the Carrier domain; sequence VPATITETAF…DLAKYIDALV (79 aa). The tract at residues 606–676 is thiolation and peptide carrier (T) domain; the sequence is TETAFAKIFA…VLRDLAKYID (71 aa). Serine 638 bears the O-(pantetheine 4'-phosphoryl)serine mark. A thioesterase (TE) domain region spans residues 702–805; it reads PIFFVHPGVG…VGLINIPPHI (104 aa).

Belongs to the ATP-dependent AMP-binding enzyme family.

It participates in secondary metabolite biosynthesis. An L-tyrosine:2-oxoglutarate aminotransferase (probably amt1) and atromentin synthetase nps3 catalyze consecutive steps to turn over L-tyrosine into atromentin, which represents the generic precursor molecule for the entire terphenylquinone and pulvinic acid family of pigments, which are widely distributed secondary metabolites in homobasidiomycetes. The first step catalyzed by the aminotransferase converts L-tyrosine in to 4-hydroxyphenylpyruvate (4-HPP). Adenylation of two 4-HPP monomers by the nps3 adenylation (A) domain, covalent tethering of the monomers as a thioester and oxoester onto the nps3 thiolation (T) and thioesterase (TE) domains, respectively, and symmetric C-C-bond formation between two monomers catalyzed by the nps3 TE domain leads to atromentin. Follow-up products of atromentin in S.lacrymans include atromentic acid, xerocomic acid, isoxerocomic acid and variegatic acid. This chain is Atromentin synthetase nps3 (nps3), found in Serpula lacrymans var. lacrymans (strain S7.9) (Dry rot fungus).